The sequence spans 415 residues: Serine hydroxymethyltransferase (415 aa).

(6S)-5,6,7,8-tetrahydrofolate contacts are provided by residues L121 and 125-127 (GHL). N6-(pyridoxal phosphate)lysine is present on K230.

The protein belongs to the SHMT family. In terms of assembly, homodimer. The cofactor is pyridoxal 5'-phosphate.

It is found in the cytoplasm. The catalysed reaction is (6R)-5,10-methylene-5,6,7,8-tetrahydrofolate + glycine + H2O = (6S)-5,6,7,8-tetrahydrofolate + L-serine. It participates in one-carbon metabolism; tetrahydrofolate interconversion. It functions in the pathway amino-acid biosynthesis; glycine biosynthesis; glycine from L-serine: step 1/1. In terms of biological role, catalyzes the reversible interconversion of serine and glycine with tetrahydrofolate (THF) serving as the one-carbon carrier. This reaction serves as the major source of one-carbon groups required for the biosynthesis of purines, thymidylate, methionine, and other important biomolecules. Also exhibits THF-independent aldolase activity toward beta-hydroxyamino acids, producing glycine and aldehydes, via a retro-aldol mechanism. The polypeptide is Serine hydroxymethyltransferase (Syntrophomonas wolfei subsp. wolfei (strain DSM 2245B / Goettingen)).